Consider the following 374-residue polypeptide: uncharacterized protein (374 aa).

The first 23 residues, 1–23 (MDSKWFFIVLISFLLVLPSIVTP), serve as a signal peptide directing secretion. The interval 66 to 374 (SSSSSSSSSS…SSSSSSSGEN (309 aa)) is disordered.

The protein localises to the secreted. This is an uncharacterized protein from Dictyostelium discoideum (Social amoeba).